The chain runs to 386 residues: MKTAVLSLLLALQAYARVTGSPSGFAAGTTGGGSATPAAPSSLDELVQWITDDTPRVILIDRTWDFIGTEGTTTGKCCSMPSTTVCNGGTSKGQAWIQDHCDGGSWVSCKYDNAALTPMDVGSNKSIVGVGNKGVIKGKGLRVRNGNKNVIIQNIHITNLNPQYVWGGDAITLDNADQVWIDHNKISLIGRQFIVSGWGKAGHVTISNNEFDGRTSWSAGCNGKHYWTLLLLGEQDYYTFEGNWLHDVSGRAPHMGTDHTKSQIFFHGVNNYFQNLGGHAFDVDTNTWVLLEGNYFENVKTPLTDTSLKAGGKLYTTSTVNAAGACLDKLGYICEWNRLAGSGAWQDRTDADVKTKAATYKNSLVGHYPVADVPAKVVANAGVGKV.

The N-terminal stretch at 1–16 is a signal peptide; that stretch reads MKTAVLSLLLALQAYA. Cysteine 77 and cysteine 101 are disulfide-bonded. An N-linked (GlcNAc...) asparagine glycan is attached at asparagine 124. Arginine 251 is an active-site residue. An intrachain disulfide couples cysteine 326 to cysteine 334.

Belongs to the polysaccharide lyase 1 family.

It is found in the secreted. It carries out the reaction Eliminative cleavage of (1-&gt;4)-alpha-D-galacturonan methyl ester to give oligosaccharides with 4-deoxy-6-O-methyl-alpha-D-galact-4-enuronosyl groups at their non-reducing ends.. Pectinolytic enzymes consist of four classes of enzymes: pectin lyase, polygalacturonase, pectin methylesterase and rhamnogalacturonase. Among pectinolytic enzymes, pectin lyase is the most important in depolymerization of pectin, since it cleaves internal glycosidic bonds of highly methylated pectins. The sequence is that of Probable pectin lyase F (pelF) from Neosartorya fischeri (strain ATCC 1020 / DSM 3700 / CBS 544.65 / FGSC A1164 / JCM 1740 / NRRL 181 / WB 181) (Aspergillus fischerianus).